The chain runs to 290 residues: Fructokinase (290 aa).

Position 130 (Thr130) interacts with ATP. The Zn(2+) site is built by His153, Cys169, His172, and Cys175. Residues Pro183 and 231-235 each bind ATP; that span reads GVMEK.

It belongs to the ROK (NagC/XylR) family. As to quaternary structure, homodimer. Mg(2+) serves as cofactor.

It catalyses the reaction D-fructose + ATP = D-fructose 6-phosphate + ADP + H(+). Inactivated by EDTA. Inhibition by zinc ions (Potential). The protein is Fructokinase (scrK) of Lactococcus lactis subsp. cremoris (Streptococcus cremoris).